Consider the following 214-residue polypeptide: ATP-dependent Clp protease proteolytic subunit 2 (214 aa).

The active-site Nucleophile is the Ser110. His135 is a catalytic residue.

This sequence belongs to the peptidase S14 family. Fourteen ClpP subunits assemble into 2 heptameric rings which stack back to back to give a disk-like structure with a central cavity, resembling the structure of eukaryotic proteasomes.

The protein resides in the cytoplasm. It carries out the reaction Hydrolysis of proteins to small peptides in the presence of ATP and magnesium. alpha-casein is the usual test substrate. In the absence of ATP, only oligopeptides shorter than five residues are hydrolyzed (such as succinyl-Leu-Tyr-|-NHMec, and Leu-Tyr-Leu-|-Tyr-Trp, in which cleavage of the -Tyr-|-Leu- and -Tyr-|-Trp bonds also occurs).. Its function is as follows. Cleaves peptides in various proteins in a process that requires ATP hydrolysis. Has a chymotrypsin-like activity. Plays a major role in the degradation of misfolded proteins. This is ATP-dependent Clp protease proteolytic subunit 2 from Mycobacterium bovis (strain ATCC BAA-935 / AF2122/97).